Reading from the N-terminus, the 1265-residue chain is Nestin (1265 aa).

The segment at 1-16 (MELLGVRQPFGPQFQE) is head. The interval 17-52 (EKYQMLELNHRLESYLGRVKLLEEENKLLREEIHTL) is coil 1A. The region spanning 17–324 (EKYQMLELNH…ALLDSEGLRI (308 aa)) is the IF rod domain. Residues 53 to 64 (KSSRDPAGQRKA) form a linker 1 region. Residues 65–160 (QEEALSQARR…QVHQENMETM (96 aa)) are coil 1B. Positions 161–183 (QASLKQTKQVLMAPQRVQATSIP) are linker 12. The tract at residues 184 to 203 (DLGQEYGYKAAQAWQEAANN) is coil 2A. The tract at residues 204 to 206 (YQK) is linker 2. The interval 207-324 (QVGRLEESLN…ALLDSEGLRI (118 aa)) is coil 2B. Positions 325 to 1265 (DRPTPNKTSS…EGDSWSSGDE (941 aa)) are tail. The span at 383 to 402 (PSWTLTRGTPQRPPSSTSMT) shows a compositional bias: polar residues. Disordered regions lie at residues 383-521 (PSWT…TEVS), 667-830 (FEVE…PDME), 863-1073 (HESL…KASQ), 1093-1116 (AQTT…LESS), and 1232-1265 (IRDD…SGDE). The span at 403–418 (EKTEDHISEETKRSAE) shows a compositional bias: basic and acidic residues. The segment covering 422 to 441 (DQLQQEKVQQDWTLESTLPK) has biased composition (polar residues). The span at 444 to 459 (AEPKPELQPEEIKVED) shows a compositional bias: basic and acidic residues. The segment covering 479-496 (LTSVPAEQQGSMSQTPET) has biased composition (polar residues). 2 stretches are compositionally biased toward acidic residues: residues 508–520 (EVSE…DTEV) and 730–739 (LNEDQSEAEE). 3 stretches are compositionally biased toward basic and acidic residues: residues 784-796 (YKSD…HIGE), 803-819 (EKER…RFNT), and 863-897 (HESL…KEED). The span at 901 to 910 (FEQNENQQLT) shows a compositional bias: polar residues. Residues 911–935 (EHQHVHTEQVEDKPVHSHETQEHVN) are compositionally biased toward basic and acidic residues. Low complexity predominate over residues 943–956 (SERSQQEQLEESSL). Polar residues predominate over residues 1015 to 1043 (PNASQCFQNTSLLAAATPNEQPLTFTNEV). Residues 1061 to 1070 (SEEKSTDEPK) show a composition bias toward basic and acidic residues. Polar residues-rich tracts occupy residues 1105–1116 (SISPVNENLESS) and 1242–1251 (PAQSKIVQSD). Residues 1252-1265 (DSADEGDSWSSGDE) are compositionally biased toward acidic residues.

The protein belongs to the intermediate filament family. In terms of assembly, forms homodimers and homotetramers in vitro. In mixtures with other intermediate filament proteins such as vimentin and alpha-internexin, preferentially forms heterodimers. As to expression, widely expressed throughout the developing nervous system at 24 hours post-fertilization (hpf). As development progresses, expression becomes restricted to proliferative zones of the developing and postembryonic central nervous system. In the peripheral nervous system, expressed in the cranial ganglia. Also expressed in mesodermal muscle precursor cells and in cranial mesenchymal tissue.

In terms of biological role, promotes the disassembly of phosphorylated vimentin intermediate filaments (IF) during mitosis and may play a role in the trafficking and distribution of IF proteins and other cellular factors to daughter cells during progenitor cell division. Required for survival, renewal and mitogen-stimulated proliferation of neural progenitor cells. Required for brain and eye development. This is Nestin (nes) from Danio rerio (Zebrafish).